The primary structure comprises 757 residues: MTTFHVAGFPRVGAKRELKFAQERYWRGEIAEQDLLEIAQKLREINWKHQAAANADFVAVADFTFYDHILDLQVATGAIPARFGFDSQNLSLNEYFQLARGNQTQFAIEMTKWFDTNYHYLVPEFTKNTEFKANPAHYVQQIREAKALGFKFKPTIVGPLTFLWLGKEKGEAFNRFELLAKLVPVYVEILNALVAEGAEWIQIDEPALAVDLPTEWIEAYKAVYTTLKEKVKAKLLLATYFGSVAEHAPLLKGLPVDGLHIDLVRAPAQLAAFEDYNKVLSVGVIDGRNIWRANLNQVLDVVEPLKAKFGENLWIAPSCSLLHTPYDLEVETQLKANKPELYSWLAFTLQKVQELRVIKTALEQGRGAVQAELDASQAAADARANSKEIHRPEVAERLANLPTDADKRKSPFAERIAKQNAWLNLPLLPTTNIGSFPQTVEIRQARAKFKKGELSVADYEAAMKKEIEFVVRRQEELDLDVLVHGEAERNDMVEYFGELLDGFAFTKFGWVQSYGSRCVKPPVIYGDVVRPEPMTVRWSQYAQSLTNKVMKGMLTGPVTILQWSFVRNDIPRSTVCKQIGVALSDEVLDLEKAGIKVIQIDEPAIREGLPLKRADWDAYLQWAGEAFRLSYMGVQDDTQIHTHMCYSEFNDILPAIAGLDADVITIETSRSDMELLTAFGDFKYPNDIGPGVYDIHSPRVPKAEEIERLLRKALNVVPKERLWVNPDCGLKTRGWPETIAQLEVMMEVTKKLRAELN.

5-methyltetrahydropteroyltri-L-glutamate contacts are provided by residues 16-19 and lysine 112; that span reads RELK. Residues 433–435 and glutamate 486 contribute to the L-homocysteine site; that span reads IGS. L-methionine contacts are provided by residues 433–435 and glutamate 486; that span reads IGS. Residues 517-518 and tryptophan 563 each bind 5-methyltetrahydropteroyltri-L-glutamate; that span reads RC. Aspartate 601 is an L-homocysteine binding site. Position 601 (aspartate 601) interacts with L-methionine. Glutamate 607 is a binding site for 5-methyltetrahydropteroyltri-L-glutamate. 3 residues coordinate Zn(2+): histidine 643, cysteine 645, and glutamate 667. Histidine 696 functions as the Proton donor in the catalytic mechanism. Cysteine 728 serves as a coordination point for Zn(2+).

Belongs to the vitamin-B12 independent methionine synthase family. Zn(2+) serves as cofactor.

The enzyme catalyses 5-methyltetrahydropteroyltri-L-glutamate + L-homocysteine = tetrahydropteroyltri-L-glutamate + L-methionine. It participates in amino-acid biosynthesis; L-methionine biosynthesis via de novo pathway; L-methionine from L-homocysteine (MetE route): step 1/1. Its function is as follows. Catalyzes the transfer of a methyl group from 5-methyltetrahydrofolate to homocysteine resulting in methionine formation. The polypeptide is 5-methyltetrahydropteroyltriglutamate--homocysteine methyltransferase (Pasteurella multocida (strain Pm70)).